The primary structure comprises 155 residues: uncharacterized protein (155 aa).

Residues 1 to 19 (MPLSKTLVQKLQQAGMAIA) form the signal peptide.

This is an uncharacterized protein from Haemophilus influenzae (strain ATCC 51907 / DSM 11121 / KW20 / Rd).